The primary structure comprises 85 residues: Protein Vpu (85 aa).

The Extracellular portion of the chain corresponds to 1-7 (MHQENLL). Residues 8 to 28 (ALIALSALCLINVLIWLFNLR) form a helical membrane-spanning segment. At 29–85 (IYLVQRKQDRREQEILERLRRIKEIRDDSDYESNEEEQQEVMELIHSHGFANPMFEL) the chain is on the cytoplasmic side.

The protein belongs to the HIV-1 VPU protein family. In terms of assembly, homopentamer. Interacts with host CD4 and BRTC; these interactions induce proteasomal degradation of CD4. Interacts with host BST2; this interaction leads to the degradation of host BST2. Interacts with host FBXW11. Interacts with host AP1M1; this interaction plays a role in the mistrafficking and subsequent degradation of host BST2. Interacts with host RANBP2; this interaction allows Vpu to down-regulate host BLM sumoylation. Phosphorylated by host CK2. This phosphorylation is necessary for interaction with human BTRC and degradation of CD4.

Its subcellular location is the host membrane. Ion channel activity is inhibited by hexamethylene amiloride in vitro. Functionally, enhances virion budding by targeting host CD4 and Tetherin/BST2 to proteasome degradation. Degradation of CD4 prevents any unwanted premature interactions between viral Env and its host receptor CD4 in the endoplasmic reticulum. Degradation of antiretroviral protein Tetherin/BST2 is important for virion budding, as BST2 tethers new viral particles to the host cell membrane. Mechanistically, Vpu bridges either CD4 or BST2 to BTRC, a substrate recognition subunit of the Skp1/Cullin/F-box protein E3 ubiquitin ligase, induces their ubiquitination and subsequent proteasomal degradation. The alteration of the E3 ligase specificity by Vpu seems to promote the degradation of host IKBKB, leading to NF-kappa-B down-regulation and subsequent apoptosis. Acts as a viroporin that forms an oligomeric ion channel in membranes. Modulates the host DNA repair mechanisms to promote degradation of nuclear viral cDNA in cells that are already productively infected in order to suppress immune sensing and proviral hyper-integration (superinfection). Manipulates PML-NBs and modulates SUMOylation of host BLM protein thereby enhancing its DNA-end processing activity toward viral unintegrated linear DNA. Also inhibits RAD52-mediated homologous repair of viral cDNA, preventing the generation of dead-end circular forms of single copies of the long terminal repeat and permitting sustained nucleolytic attack. In Human immunodeficiency virus type 1 group O (isolate MVP5180) (HIV-1), this protein is Protein Vpu.